The primary structure comprises 218 residues: Peptidyl-prolyl cis-trans isomerase FKBP7 (218 aa).

The signal sequence occupies residues 1-19; it reads MNLLFRLAVFLSLWCCSDA. Residues Asn-41 and Asn-128 are each glycosylated (N-linked (GlcNAc...) asparagine). The 93-residue stretch at 49 to 141 folds into the PPIase FKBP-type domain; the sequence is GDLLNAHYDG…MFEIELYAVT (93 aa). 2 EF-hand domains span residues 141 to 176 and 185 to 218; these read TKGP…DFEK and YQKA…HDEL. Residues Asp-154, Asp-156, Asp-158, Gln-160, Glu-165, Asp-198, Asn-200, Asp-202, and Glu-209 each contribute to the Ca(2+) site. Residues 197–218 are disordered; the sequence is NDHNGDGFISPKEYNVHQHDEL. Positions 215–218 match the Prevents secretion from ER motif; the sequence is HDEL.

Post-translationally, glycosylated. Expressed at highest levels in heart, lung and testis. Weakly expressed in kidney and lymph node. Little or no expression detected in brain, thymus, spleen and liver.

The protein resides in the endoplasmic reticulum lumen. The catalysed reaction is [protein]-peptidylproline (omega=180) = [protein]-peptidylproline (omega=0). In terms of biological role, PPIases accelerate the folding of proteins during protein synthesis. The sequence is that of Peptidyl-prolyl cis-trans isomerase FKBP7 (Fkbp7) from Mus musculus (Mouse).